A 659-amino-acid chain; its full sequence is MYLKEGCSLLLKVQKPLIPFVLNTNLNVNHLLTESPNHAEIKELDVVKRLRQESCVPLALHFFKSIANSNLFKHTPLTFEVMIRKLAMDGQVDSVQYLLQQMKLQGFHCSEDLFISVISVYRQVGLAERAVEMFYRIKEFGCDPSVKIYNHVLDTLLGENRIQMIYMVYRDMKRDGFEPNVFTYNVLLKALCKNNKVDGAKKLLVEMSNKGCCPDAVSYTTVISSMCEVGLVKEGRELAERFEPVVSVYNALINGLCKEHDYKGAFELMREMVEKGISPNVISYSTLINVLCNSGQIELAFSFLTQMLKRGCHPNIYTLSSLVKGCFLRGTTFDALDLWNQMIRGFGLQPNVVAYNTLVQGFCSHGNIVKAVSVFSHMEEIGCSPNIRTYGSLINGFAKRGSLDGAVYIWNKMLTSGCCPNVVVYTNMVEALCRHSKFKEAESLIEIMSKENCAPSVPTFNAFIKGLCDAGRLDWAEKVFRQMEQQHRCPPNIVTYNELLDGLAKANRIEEAYGLTREIFMRGVEWSSSTYNTLLHGSCNAGLPGIALQLVGKMMVDGKSPDEITMNMIILAYCKQGKAERAAQMLDLVSCGRRKWRPDVISYTNVIWGLCRSNCREDGVILLERMISAGIVPSIATWSVLINCFILDDIVRAHDQFTI.

16 PPR repeats span residues 75–109 (TPLT…GFHC), 110–144 (SEDL…GCDP), 145–179 (SVKI…GFEP), 180–214 (NVFT…GCCP), 215–243 (DAVS…ERFE), 245–279 (VVSV…GISP), 280–314 (NVIS…GCHP), 315–350 (NIYT…GLQP), 351–385 (NVVA…GCSP), 386–420 (NIRT…GCCP), 421–455 (NVVV…NCAP), 456–490 (SVPT…HRCP), 492–526 (NIVT…GVEW), 527–561 (SSST…GKSP), 562–598 (DEIT…KWRP), and 599–633 (DVIS…GIVP).

It belongs to the PPR family. P subfamily.

The sequence is that of Pentatricopeptide repeat-containing protein At3g48810 from Arabidopsis thaliana (Mouse-ear cress).